Here is a 141-residue protein sequence, read N- to C-terminus: HTH-type transcriptional repressor NsrR (141 aa).

Positions 2 to 129 (QLTSFTDYGL…DSHTLADMVE (128 aa)) constitute an HTH rrf2-type domain. The segment at residues 28–51 (ISEVTEVYGVSRNHMVKIINQLSR) is a DNA-binding region (H-T-H motif). The [2Fe-2S] cluster site is built by Cys91, Cys96, and Cys102.

[2Fe-2S] cluster serves as cofactor.

Its function is as follows. Nitric oxide-sensitive repressor of genes involved in protecting the cell against nitrosative stress. May require iron for activity. This Serratia proteamaculans (strain 568) protein is HTH-type transcriptional repressor NsrR.